We begin with the raw amino-acid sequence, 109 residues long: Large ribosomal subunit protein uL24 (109 aa).

It belongs to the universal ribosomal protein uL24 family. As to quaternary structure, part of the 50S ribosomal subunit.

Functionally, one of two assembly initiator proteins, it binds directly to the 5'-end of the 23S rRNA, where it nucleates assembly of the 50S subunit. One of the proteins that surrounds the polypeptide exit tunnel on the outside of the subunit. This chain is Large ribosomal subunit protein uL24, found in Mesoplasma florum (strain ATCC 33453 / NBRC 100688 / NCTC 11704 / L1) (Acholeplasma florum).